We begin with the raw amino-acid sequence, 172 residues long: Cytidylate kinase (172 aa).

4–12 (GPPGSGKST) lines the ATP pocket.

Belongs to the cytidylate kinase family. Type 2 subfamily.

The protein localises to the cytoplasm. The enzyme catalyses CMP + ATP = CDP + ADP. It catalyses the reaction dCMP + ATP = dCDP + ADP. The protein is Cytidylate kinase (cmk) of Aeropyrum pernix (strain ATCC 700893 / DSM 11879 / JCM 9820 / NBRC 100138 / K1).